The sequence spans 181 residues: Adenine phosphoribosyltransferase (181 aa).

The protein belongs to the purine/pyrimidine phosphoribosyltransferase family. In terms of assembly, homodimer.

The protein localises to the cytoplasm. The catalysed reaction is AMP + diphosphate = 5-phospho-alpha-D-ribose 1-diphosphate + adenine. It functions in the pathway purine metabolism; AMP biosynthesis via salvage pathway; AMP from adenine: step 1/1. Functionally, catalyzes a salvage reaction resulting in the formation of AMP, that is energically less costly than de novo synthesis. This Neorhizobium galegae (Rhizobium galegae) protein is Adenine phosphoribosyltransferase.